The chain runs to 892 residues: Translation initiation factor IF-2 (892 aa).

Disordered regions lie at residues 144 to 176 (QQRLAEVDRQRVEEQERKRREEEQAELERQKTE) and 189 to 298 (SNSV…SGAH). Low complexity predominate over residues 207 to 219 (LPRTVRPTPAARP). The 170-residue stretch at 391–560 (PRPPVVTIMG…SIQAEVLELK (170 aa)) folds into the tr-type G domain. GTP is bound by residues 400–407 (GHVDHGKT), 446–450 (DTPGH), and 500–503 (SKID).

Belongs to the TRAFAC class translation factor GTPase superfamily. Classic translation factor GTPase family. IF-2 subfamily.

It is found in the cytoplasm. One of the essential components for the initiation of protein synthesis. Protects formylmethionyl-tRNA from spontaneous hydrolysis and promotes its binding to the 30S ribosomal subunits. Also involved in the hydrolysis of GTP during the formation of the 70S ribosomal complex. The chain is Translation initiation factor IF-2 from Xylella fastidiosa (strain M12).